The following is a 91-amino-acid chain: Molybdopterin synthase sulfur carrier subunit (91 aa).

Gly91 is modified (1-thioglycine; alternate). Gly91 carries the glycyl adenylate; alternate modification.

It belongs to the MoaD family. MOCS2A subfamily. Heterotetramer; composed of 2 small (MOCS2A) and 2 large (MOCS2B) subunits. C-terminal thiocarboxylation occurs in 2 steps, it is first acyl-adenylated (-COAMP) via the hesA/moeB/thiF part of uba4, then thiocarboxylated (-COSH) via the rhodanese domain of uba4.

Its subcellular location is the cytoplasm. It functions in the pathway cofactor biosynthesis; molybdopterin biosynthesis. Its function is as follows. Acts as a sulfur carrier required for molybdopterin biosynthesis. Component of the molybdopterin synthase complex that catalyzes the conversion of precursor Z into molybdopterin by mediating the incorporation of 2 sulfur atoms into precursor Z to generate a dithiolene group. In the complex, serves as sulfur donor by being thiocarboxylated (-COSH) at its C-terminus by uba4. After interaction with MOCS2B, the sulfur is then transferred to precursor Z to form molybdopterin. This chain is Molybdopterin synthase sulfur carrier subunit, found in Emericella nidulans (strain FGSC A4 / ATCC 38163 / CBS 112.46 / NRRL 194 / M139) (Aspergillus nidulans).